The following is a 205-amino-acid chain: Imidazole glycerol phosphate synthase subunit HisH (205 aa).

The region spanning 1–205 (MIALVDYGGG…FFKMALGDKK (205 aa)) is the Glutamine amidotransferase type-1 domain. Cysteine 79 acts as the Nucleophile in catalysis. Residues histidine 181 and glutamate 183 contribute to the active site.

As to quaternary structure, heterodimer of HisH and HisF.

The protein localises to the cytoplasm. It carries out the reaction 5-[(5-phospho-1-deoxy-D-ribulos-1-ylimino)methylamino]-1-(5-phospho-beta-D-ribosyl)imidazole-4-carboxamide + L-glutamine = D-erythro-1-(imidazol-4-yl)glycerol 3-phosphate + 5-amino-1-(5-phospho-beta-D-ribosyl)imidazole-4-carboxamide + L-glutamate + H(+). It catalyses the reaction L-glutamine + H2O = L-glutamate + NH4(+). It participates in amino-acid biosynthesis; L-histidine biosynthesis; L-histidine from 5-phospho-alpha-D-ribose 1-diphosphate: step 5/9. Functionally, IGPS catalyzes the conversion of PRFAR and glutamine to IGP, AICAR and glutamate. The HisH subunit catalyzes the hydrolysis of glutamine to glutamate and ammonia as part of the synthesis of IGP and AICAR. The resulting ammonia molecule is channeled to the active site of HisF. This chain is Imidazole glycerol phosphate synthase subunit HisH, found in Dehalococcoides mccartyi (strain ATCC BAA-2266 / KCTC 15142 / 195) (Dehalococcoides ethenogenes (strain 195)).